Here is a 224-residue protein sequence, read N- to C-terminus: Urease accessory protein UreF (224 aa).

It belongs to the UreF family. UreD, UreF and UreG form a complex that acts as a GTP-hydrolysis-dependent molecular chaperone, activating the urease apoprotein by helping to assemble the nickel containing metallocenter of UreC. The UreE protein probably delivers the nickel.

Its subcellular location is the cytoplasm. In terms of biological role, required for maturation of urease via the functional incorporation of the urease nickel metallocenter. In Escherichia coli O157:H7, this protein is Urease accessory protein UreF.